Consider the following 410-residue polypeptide: Replication factor C large subunit (410 aa).

Residue 46–53 (GDPGTGKT) participates in ATP binding.

The protein belongs to the activator 1 small subunits family. RfcL subfamily. As to quaternary structure, heteromultimer composed of small subunits (RfcS) and large subunits (RfcL).

Part of the RFC clamp loader complex which loads the PCNA sliding clamp onto DNA. In Picrophilus torridus (strain ATCC 700027 / DSM 9790 / JCM 10055 / NBRC 100828 / KAW 2/3), this protein is Replication factor C large subunit.